We begin with the raw amino-acid sequence, 468 residues long: ATP synthase subunit beta (468 aa).

155–162 provides a ligand contact to ATP; it reads GGAGVGKT.

Belongs to the ATPase alpha/beta chains family. In terms of assembly, F-type ATPases have 2 components, CF(1) - the catalytic core - and CF(0) - the membrane proton channel. CF(1) has five subunits: alpha(3), beta(3), gamma(1), delta(1), epsilon(1). CF(0) has three main subunits: a(1), b(2) and c(9-12). The alpha and beta chains form an alternating ring which encloses part of the gamma chain. CF(1) is attached to CF(0) by a central stalk formed by the gamma and epsilon chains, while a peripheral stalk is formed by the delta and b chains.

The protein resides in the cell membrane. It catalyses the reaction ATP + H2O + 4 H(+)(in) = ADP + phosphate + 5 H(+)(out). Produces ATP from ADP in the presence of a proton gradient across the membrane. The catalytic sites are hosted primarily by the beta subunits. The polypeptide is ATP synthase subunit beta (Bacillus cereus (strain B4264)).